Here is a 223-residue protein sequence, read N- to C-terminus: UPF0441 protein YgiB (223 aa).

Residues 178–195 are compositionally biased toward low complexity; sequence TVPKTAMAPKPATTTTVT. Residues 178-223 form a disordered region; the sequence is TVPKTAMAPKPATTTTVTRGGFGESVAKQSTMQRSATGTSSRSMGG. Over residues 204–223 the composition is skewed to polar residues; the sequence is AKQSTMQRSATGTSSRSMGG.

It belongs to the UPF0441 family.

This is UPF0441 protein YgiB from Shigella flexneri serotype 5b (strain 8401).